A 331-amino-acid chain; its full sequence is GTPase Obg (331 aa).

Positions Met-1–Leu-159 constitute an Obg domain. Positions Ala-160–Gly-328 constitute an OBG-type G domain. Residues Gly-166–Ser-173, Phe-191–Val-195, Asp-213–Gly-216, Ser-280–Glu-283, and Ser-309–Val-311 contribute to the GTP site. 2 residues coordinate Mg(2+): Ser-173 and Thr-193.

The protein belongs to the TRAFAC class OBG-HflX-like GTPase superfamily. OBG GTPase family. Monomer. Requires Mg(2+) as cofactor.

The protein localises to the cytoplasm. Functionally, an essential GTPase which binds GTP, GDP and possibly (p)ppGpp with moderate affinity, with high nucleotide exchange rates and a fairly low GTP hydrolysis rate. Plays a role in control of the cell cycle, stress response, ribosome biogenesis and in those bacteria that undergo differentiation, in morphogenesis control. The sequence is that of GTPase Obg from Synechococcus sp. (strain RCC307).